The following is a 65-amino-acid chain: Antimicrobial peptide 1 (65 aa).

An N-terminal signal peptide occupies residues 1 to 27 (MAKVSSAYLKFALVMILLLSVISAVMS). 3 disulfides stabilise this stretch: cysteine 30–cysteine 47, cysteine 37–cysteine 51, and cysteine 46–cysteine 62.

It belongs to the AMP family. In terms of tissue distribution, seed specific.

Its subcellular location is the secreted. In terms of biological role, possesses antifungal activity. This Phytolacca americana (American pokeweed) protein is Antimicrobial peptide 1.